The sequence spans 373 residues: UDP-3-O-acylglucosamine N-acyltransferase 2 (373 aa).

Residue His-239 is the Proton acceptor of the active site. A disordered region spans residues 345–373 (KTNGKSGQADAPPKVALECHGTTGDAPQG).

The protein belongs to the transferase hexapeptide repeat family. LpxD subfamily. Homotrimer.

The enzyme catalyses a UDP-3-O-[(3R)-3-hydroxyacyl]-alpha-D-glucosamine + a (3R)-hydroxyacyl-[ACP] = a UDP-2-N,3-O-bis[(3R)-3-hydroxyacyl]-alpha-D-glucosamine + holo-[ACP] + H(+). It functions in the pathway bacterial outer membrane biogenesis; LPS lipid A biosynthesis. In terms of biological role, catalyzes the N-acylation of UDP-3-O-acylglucosamine using 3-hydroxyacyl-ACP as the acyl donor. Is involved in the biosynthesis of lipid A, a phosphorylated glycolipid that anchors the lipopolysaccharide to the outer membrane of the cell. This Gloeobacter violaceus (strain ATCC 29082 / PCC 7421) protein is UDP-3-O-acylglucosamine N-acyltransferase 2.